A 365-amino-acid polypeptide reads, in one-letter code: Phosphopantothenate--cysteine ligase CAB2 (365 aa).

Residues 228 to 250 (QSGDNGKMGANNDTEGTTRTTPD) form a disordered region. The span at 238–248 (NNDTEGTTRTT) shows a compositional bias: polar residues.

This sequence belongs to the PPC synthetase family. As to quaternary structure, homodimer.

The protein resides in the cytoplasm. Its subcellular location is the nucleus. It carries out the reaction (R)-4'-phosphopantothenate + L-cysteine + CTP = N-[(R)-4-phosphopantothenoyl]-L-cysteine + CMP + diphosphate + H(+). It participates in cofactor biosynthesis; coenzyme A biosynthesis; CoA from (R)-pantothenate: step 2/5. Its function is as follows. Catalyzes the first step in the biosynthesis of coenzyme A from vitamin B5, where cysteine is conjugated to 4'-phosphopantothenate to form 4-phosphopantothenoylcysteine. The sequence is that of Phosphopantothenate--cysteine ligase CAB2 (CAB2) from Saccharomyces cerevisiae (strain ATCC 204508 / S288c) (Baker's yeast).